A 141-amino-acid chain; its full sequence is MAQYLSTLLLLLATLAVALAWSPKEEDRIIPGGIYNADLNDEWVQRALHFAISEYNKATKDDYYRRPLRVLRARQQTVGGVNYFFDVEVGRTICTKSQPNLDTCAFHEQPELQKKQLCSFEIYEVPWENRRSLVKSRCQES.

Positions 1–20 (MAQYLSTLLLLLATLAVALA) are cleaved as a signal peptide. A Secondary area of contact motif is present at residues 76–80 (QTVGG). Intrachain disulfides connect C94–C104 and C118–C138.

Belongs to the cystatin family. As to expression, expressed in submandibular and sublingual saliva but not in parotid saliva (at protein level). Expressed in saliva, tears, urine and seminal fluid.

The protein localises to the secreted. Human saliva appears to contain several cysteine proteinase inhibitors that are immunologically related to cystatin S but that differ in their specificity due to amino acid sequence differences. Cystatin SN, with a pI of 7.5, is a much better inhibitor of papain and dipeptidyl peptidase I than is cystatin S, although both inhibit ficin equally well. This is Cystatin-SN (CST1) from Homo sapiens (Human).